Reading from the N-terminus, the 165-residue chain is ATP synthase subunit b (165 aa).

The chain crosses the membrane as a helical span at residues 11-31 (LIFWTIVNFLLLVFLLGKFAW).

It belongs to the ATPase B chain family. As to quaternary structure, F-type ATPases have 2 components, F(1) - the catalytic core - and F(0) - the membrane proton channel. F(1) has five subunits: alpha(3), beta(3), gamma(1), delta(1), epsilon(1). F(0) has three main subunits: a(1), b(2) and c(10-14). The alpha and beta chains form an alternating ring which encloses part of the gamma chain. F(1) is attached to F(0) by a central stalk formed by the gamma and epsilon chains, while a peripheral stalk is formed by the delta and b chains.

The protein localises to the cell membrane. Its function is as follows. F(1)F(0) ATP synthase produces ATP from ADP in the presence of a proton or sodium gradient. F-type ATPases consist of two structural domains, F(1) containing the extramembraneous catalytic core and F(0) containing the membrane proton channel, linked together by a central stalk and a peripheral stalk. During catalysis, ATP synthesis in the catalytic domain of F(1) is coupled via a rotary mechanism of the central stalk subunits to proton translocation. In terms of biological role, component of the F(0) channel, it forms part of the peripheral stalk, linking F(1) to F(0). The polypeptide is ATP synthase subunit b (Elusimicrobium minutum (strain Pei191)).